Here is a 658-residue protein sequence, read N- to C-terminus: Transport protein particle subunit trs85-1 (658 aa).

Belongs to the TRS85 family. As to quaternary structure, part of the multisubunit TRAPP (transport protein particle) complexes I and II.

The protein localises to the golgi apparatus. It localises to the cis-Golgi network. Its function is as follows. Component of the TRAPP I and TRAPP II complexes. TRAPP I plays a key role in the late stages of endoplasmic reticulum to Golgi traffic. TRAPP II seems to play a role in intra-Golgi transport. Has a role late in meiosis following DNA replication. In Schizosaccharomyces pombe (strain 972 / ATCC 24843) (Fission yeast), this protein is Transport protein particle subunit trs85-1 (trs85-1).